Consider the following 136-residue polypeptide: Diuretic hormone 41 (136 aa).

The N-terminal stretch at 1–26 is a signal peptide; the sequence is MMWWAVWCAAMVAGSVFTAAAPPTDS. A propeptide spanning residues 27-76 is cleaved from the precursor; that stretch reads IDLMQMDPSLADDESLGFAMQSLSGRYAAAPWLYLLADVSHDPQNGSDRV. An Isoleucine amide modification is found at isoleucine 119. Residues 123–136 constitute a propeptide that is removed on maturation; sequence GFHWAPSAKAAKFY.

Belongs to the sauvagine/corticotropin-releasing factor/urotensin I family.

The protein resides in the secreted. Its function is as follows. Regulation of fluid secretion. The protein is Diuretic hormone 41 (dh41) of Bombyx mori (Silk moth).